The primary structure comprises 130 residues: Small ribosomal subunit protein uS9 (130 aa).

The protein belongs to the universal ribosomal protein uS9 family.

The protein is Small ribosomal subunit protein uS9 of Vibrio atlanticus (strain LGP32) (Vibrio splendidus (strain Mel32)).